A 500-amino-acid polypeptide reads, in one-letter code: Protein FAM114A2 (500 aa).

The segment at 1-82 (MSNKDDLETA…AAGKETVSKD (82 aa)) is disordered. A phosphoserine mark is found at S93, S152, and S215.

This sequence belongs to the FAM114 family.

The polypeptide is Protein FAM114A2 (FAM114A1) (Bos taurus (Bovine)).